A 338-amino-acid polypeptide reads, in one-letter code: Methionine import ATP-binding protein MetN 2 (338 aa).

Residues 2–242 (IEIEKVCVDF…PQHAFTQQLV (241 aa)) form the ABC transporter domain. 39 to 46 (GTSGAGKS) is a binding site for ATP.

It belongs to the ABC transporter superfamily. Methionine importer (TC 3.A.1.24) family. As to quaternary structure, the complex is composed of two ATP-binding proteins (MetN), two transmembrane proteins (MetI) and a solute-binding protein (MetQ).

The protein resides in the cell inner membrane. The catalysed reaction is L-methionine(out) + ATP + H2O = L-methionine(in) + ADP + phosphate + H(+). It carries out the reaction D-methionine(out) + ATP + H2O = D-methionine(in) + ADP + phosphate + H(+). Functionally, part of the ABC transporter complex MetNIQ involved in methionine import. Responsible for energy coupling to the transport system. In Salmonella typhimurium (strain LT2 / SGSC1412 / ATCC 700720), this protein is Methionine import ATP-binding protein MetN 2.